Reading from the N-terminus, the 186-residue chain is Elongation factor P (186 aa).

The protein belongs to the elongation factor P family.

It is found in the cytoplasm. It participates in protein biosynthesis; polypeptide chain elongation. Functionally, involved in peptide bond synthesis. Stimulates efficient translation and peptide-bond synthesis on native or reconstituted 70S ribosomes in vitro. Probably functions indirectly by altering the affinity of the ribosome for aminoacyl-tRNA, thus increasing their reactivity as acceptors for peptidyl transferase. This Beutenbergia cavernae (strain ATCC BAA-8 / DSM 12333 / CCUG 43141 / JCM 11478 / NBRC 16432 / NCIMB 13614 / HKI 0122) protein is Elongation factor P.